Here is a 1025-residue protein sequence, read N- to C-terminus: Presequence protease, mitochondrial (1025 aa).

His-90 contributes to the Zn(2+) binding site. The Proton acceptor role is filled by Glu-93. His-94 contributes to the Zn(2+) binding site. Residue Glu-166 is part of the active site. Residue Glu-197 coordinates Zn(2+).

This sequence belongs to the peptidase M16 family. PreP subfamily. As to quaternary structure, monomer and homodimer; homodimerization is induced by binding of the substrate. The cofactor is Zn(2+).

It is found in the mitochondrion intermembrane space. Its subcellular location is the mitochondrion matrix. Functionally, degrades mitochondrial transit peptides after their cleavage in the intermembrane space or in the matrix, and presequence peptides; clearance of these peptides is required to keep the presequence processing machinery running. Preferentially cleaves the N-terminal side of paired basic amino acid residues. Also degrades other unstructured peptides. May function as an ATP-dependent peptidase as opposed to a metalloendopeptidase. This is Presequence protease, mitochondrial (cym1) from Aspergillus oryzae (strain ATCC 42149 / RIB 40) (Yellow koji mold).